A 254-amino-acid chain; its full sequence is Thiazole synthase (254 aa).

K95 (schiff-base intermediate with DXP) is an active-site residue. 1-deoxy-D-xylulose 5-phosphate contacts are provided by residues G156, 182–183 (AG), and 204–205 (NT).

Belongs to the ThiG family. As to quaternary structure, homotetramer. Forms heterodimers with either ThiH or ThiS.

Its subcellular location is the cytoplasm. The enzyme catalyses [ThiS sulfur-carrier protein]-C-terminal-Gly-aminoethanethioate + 2-iminoacetate + 1-deoxy-D-xylulose 5-phosphate = [ThiS sulfur-carrier protein]-C-terminal Gly-Gly + 2-[(2R,5Z)-2-carboxy-4-methylthiazol-5(2H)-ylidene]ethyl phosphate + 2 H2O + H(+). The protein operates within cofactor biosynthesis; thiamine diphosphate biosynthesis. Catalyzes the rearrangement of 1-deoxy-D-xylulose 5-phosphate (DXP) to produce the thiazole phosphate moiety of thiamine. Sulfur is provided by the thiocarboxylate moiety of the carrier protein ThiS. In vitro, sulfur can be provided by H(2)S. This is Thiazole synthase from Shewanella oneidensis (strain ATCC 700550 / JCM 31522 / CIP 106686 / LMG 19005 / NCIMB 14063 / MR-1).